A 325-amino-acid polypeptide reads, in one-letter code: Eukaryotic translation initiation factor 3 subunit I (325 aa).

WD repeat units lie at residues 8–47 (GHERSITQIKYNREGDLLFTVAKDPIVNVWYSVNGERLGT), 50–91 (GHTG…ALLK), 144–183 (CNDSKITSAVWGPLGECIIAGHESGELNQYSAKSGEVLVN), and 186–225 (EHSRQINDIQLSRDMTMFVTASKDNTAKLFDSTTLEHQKT). Thr-219 is subject to Phosphothreonine. Lys-264 carries the post-translational modification N6-acetyllysine. A Glycyl lysine isopeptide (Lys-Gly) (interchain with G-Cter in ubiquitin) cross-link involves residue Lys-282. The WD 5 repeat unit spans residues 283 to 324 (GHFGLINSVAFHPDGKSYSSGGEDGYVRIHYFDPQYFEFEFE). Tyr-308 carries the post-translational modification Phosphotyrosine.

Belongs to the eIF-3 subunit I family. Component of the eukaryotic translation initiation factor 3 (eIF-3) complex, which is composed of 13 subunits: EIF3A, EIF3B, EIF3C, EIF3D, EIF3E, EIF3F, EIF3G, EIF3H, EIF3I, EIF3J, EIF3K, EIF3L and EIF3M. The eIF-3 complex appears to include 3 stable modules: module A is composed of EIF3A, EIF3B, EIF3G and EIF3I; module B is composed of EIF3F, EIF3H, and EIF3M; and module C is composed of EIF3C, EIF3D, EIF3E, EIF3K and EIF3L. EIF3C of module C binds EIF3B of module A and EIF3H of module B, thereby linking the three modules. EIF3J is a labile subunit that binds to the eIF-3 complex via EIF3B. The eIF-3 complex interacts with RPS6KB1 under conditions of nutrient depletion. Mitogenic stimulation leads to binding and activation of a complex composed of MTOR and RPTOR, leading to phosphorylation and release of RPS6KB1 and binding of EIF4B to eIF-3. Post-translationally, phosphorylated by TGF-beta type II receptor.

Its subcellular location is the cytoplasm. Its function is as follows. Component of the eukaryotic translation initiation factor 3 (eIF-3) complex, which is required for several steps in the initiation of protein synthesis. The eIF-3 complex associates with the 40S ribosome and facilitates the recruitment of eIF-1, eIF-1A, eIF-2:GTP:methionyl-tRNAi and eIF-5 to form the 43S pre-initiation complex (43S PIC). The eIF-3 complex stimulates mRNA recruitment to the 43S PIC and scanning of the mRNA for AUG recognition. The eIF-3 complex is also required for disassembly and recycling of post-termination ribosomal complexes and subsequently prevents premature joining of the 40S and 60S ribosomal subunits prior to initiation. The eIF-3 complex specifically targets and initiates translation of a subset of mRNAs involved in cell proliferation, including cell cycling, differentiation and apoptosis, and uses different modes of RNA stem-loop binding to exert either translational activation or repression. The protein is Eukaryotic translation initiation factor 3 subunit I of Pongo abelii (Sumatran orangutan).